Consider the following 760-residue polypeptide: Xaa-Pro dipeptidyl-peptidase (760 aa).

Active-site charge relay system residues include serine 349, aspartate 469, and histidine 499.

Belongs to the peptidase S15 family. In terms of assembly, homodimer.

The protein localises to the cytoplasm. The catalysed reaction is Hydrolyzes Xaa-Pro-|- bonds to release unblocked, N-terminal dipeptides from substrates including Ala-Pro-|-p-nitroanilide and (sequentially) Tyr-Pro-|-Phe-Pro-|-Gly-Pro-|-Ile.. Removes N-terminal dipeptides sequentially from polypeptides having unsubstituted N-termini provided that the penultimate residue is proline. This is Xaa-Pro dipeptidyl-peptidase from Streptococcus pyogenes serotype M4 (strain MGAS10750).